The following is a 399-amino-acid chain: Developmentally-regulated G-protein 2 (399 aa).

The region spanning 63 to 288 (GRVALIGFPS…LLARMWDEMG (226 aa)) is the OBG-type G domain. Residues 69-76 (GFPSVGKS), 115-119 (DLPGI), and 246-249 (NKID) each bind GTP. The TGS domain maps to 288–366 (GLVRVYSKPQ…EDEDVVQIVK (79 aa)). Residues 372 to 399 (EGGRGRFKSHSNAPARIADREKKAPLKQ) are disordered. The segment covering 388 to 399 (IADREKKAPLKQ) has biased composition (basic and acidic residues).

The protein belongs to the TRAFAC class OBG-HflX-like GTPase superfamily. OBG GTPase family.

It is found in the cytoplasm. Binds GDP and GTP, and has low GTPase activity. The polypeptide is Developmentally-regulated G-protein 2 (DRG2) (Arabidopsis thaliana (Mouse-ear cress)).